A 337-amino-acid polypeptide reads, in one-letter code: Transaldolase (337 aa).

The short motif at 1-10 (MSSSPVKRQR) is the Nuclear localization signal element. An N6-acetyllysine modification is found at K115. K142 functions as the Schiff-base intermediate with substrate in the catalytic mechanism. Position 219 is an N6-acetyllysine (K219). S237 and S256 each carry phosphoserine. An N6-acetyllysine mark is found at K269, K286, and K321.

Belongs to the transaldolase family. Type 1 subfamily. As to quaternary structure, homodimer. Heterodimer with isoform 2. Interacts with KPNA1 and KPNA4.

The protein localises to the nucleus. It is found in the cytoplasm. It catalyses the reaction D-sedoheptulose 7-phosphate + D-glyceraldehyde 3-phosphate = D-erythrose 4-phosphate + beta-D-fructose 6-phosphate. Its pathway is carbohydrate degradation; pentose phosphate pathway; D-glyceraldehyde 3-phosphate and beta-D-fructose 6-phosphate from D-ribose 5-phosphate and D-xylulose 5-phosphate (non-oxidative stage): step 2/3. In terms of biological role, catalyzes the rate-limiting step of the non-oxidative phase in the pentose phosphate pathway. Catalyzes the reversible conversion of sedheptulose-7-phosphate and D-glyceraldehyde 3-phosphate into erythrose-4-phosphate and beta-D-fructose 6-phosphate. Not only acts as a pentose phosphate pathway enzyme, but also affects other metabolite pathways by altering its subcellular localization between the nucleus and the cytoplasm. In Homo sapiens (Human), this protein is Transaldolase.